The following is a 443-amino-acid chain: Tubulin beta chain (443 aa).

GTP-binding residues include Gln11, Glu69, Ser138, Gly142, Thr143, Gly144, Asn204, and Asn226. Glu69 lines the Mg(2+) pocket. Residues 424-443 (QYQDATAEEEGEFEEEEGEN) are disordered. Acidic residues predominate over residues 429-443 (TAEEEGEFEEEEGEN).

Belongs to the tubulin family. As to quaternary structure, dimer of alpha and beta chains. A typical microtubule is a hollow water-filled tube with an outer diameter of 25 nm and an inner diameter of 15 nM. Alpha-beta heterodimers associate head-to-tail to form protofilaments running lengthwise along the microtubule wall with the beta-tubulin subunit facing the microtubule plus end conferring a structural polarity. Microtubules usually have 13 protofilaments but different protofilament numbers can be found in some organisms and specialized cells. Mg(2+) is required as a cofactor.

It localises to the cytoplasm. The protein localises to the cytoskeleton. In terms of biological role, tubulin is the major constituent of microtubules, a cylinder consisting of laterally associated linear protofilaments composed of alpha- and beta-tubulin heterodimers. Microtubules grow by the addition of GTP-tubulin dimers to the microtubule end, where a stabilizing cap forms. Below the cap, tubulin dimers are in GDP-bound state, owing to GTPase activity of alpha-tubulin. This Tetrahymena pyriformis protein is Tubulin beta chain (BETA-TT1).